A 396-amino-acid chain; its full sequence is tRNA(Met) cytidine acetate ligase (396 aa).

Residues 9–22 (IVEY…HLHH), Gly103, Asn154, and Arg179 contribute to the ATP site.

This sequence belongs to the TmcAL family.

Its subcellular location is the cytoplasm. It catalyses the reaction cytidine(34) in elongator tRNA(Met) + acetate + ATP = N(4)-acetylcytidine(34) in elongator tRNA(Met) + AMP + diphosphate. In terms of biological role, catalyzes the formation of N(4)-acetylcytidine (ac(4)C) at the wobble position of elongator tRNA(Met), using acetate and ATP as substrates. First activates an acetate ion to form acetyladenylate (Ac-AMP) and then transfers the acetyl group to tRNA to form ac(4)C34. In Fusobacterium nucleatum subsp. nucleatum (strain ATCC 25586 / DSM 15643 / BCRC 10681 / CIP 101130 / JCM 8532 / KCTC 2640 / LMG 13131 / VPI 4355), this protein is tRNA(Met) cytidine acetate ligase.